The sequence spans 204 residues: Recombination protein RecR (204 aa).

The C4-type zinc finger occupies 63 to 78 (CRICFNVADSELCPIC). In terms of domain architecture, Toprim spans 86–181 (NKICVVEQPQ…KVTRLARGLP (96 aa)).

Belongs to the RecR family.

In terms of biological role, may play a role in DNA repair. It seems to be involved in an RecBC-independent recombinational process of DNA repair. It may act with RecF and RecO. This Dehalococcoides mccartyi (strain ATCC BAA-2266 / KCTC 15142 / 195) (Dehalococcoides ethenogenes (strain 195)) protein is Recombination protein RecR.